Consider the following 137-residue polypeptide: Protein cornichon homolog 4 (137 aa).

3 helical membrane passes run 8-28 (LISF…LVCL), 53-73 (FIVQ…FMTL), and 113-133 (LAYI…SALD).

Belongs to the cornichon family.

It localises to the membrane. The polypeptide is Protein cornichon homolog 4 (Arabidopsis thaliana (Mouse-ear cress)).